The following is a 293-amino-acid chain: AA9 family lytic polysaccharide monooxygenase E (293 aa).

The signal sequence occupies residues 1–19; sequence MKGLLSVAALSLAVSEVSA. Cu(2+) contacts are provided by H20 and H90. C59 and C172 are disulfide-bonded. Positions 158 and 167 each coordinate O2. Y169 provides a ligand contact to Cu(2+). The CBM1 domain occupies 257–293; it reads CAVAKWGQCGGNGWTGCTTCAAGSTCNTQNAYYHQCV.

Belongs to the polysaccharide monooxygenase AA9 family. It depends on Cu(2+) as a cofactor.

The protein localises to the secreted. It catalyses the reaction [(1-&gt;4)-beta-D-glucosyl]n+m + reduced acceptor + O2 = 4-dehydro-beta-D-glucosyl-[(1-&gt;4)-beta-D-glucosyl]n-1 + [(1-&gt;4)-beta-D-glucosyl]m + acceptor + H2O.. Its activity is regulated as follows. Glucose dehydrogenase and aryl-alcohol quinone oxidoreductases regulate the oxidative degradation of cellulose since they can act as catalytically efficient electron donors for LPMO9E. Lytic polysaccharide monooxygenase (LPMO) that depolymerizes crystalline and amorphous polysaccharides via the oxidation of scissile alpha- or beta-(1-4)-glycosidic bonds, yielding only C1 oxidation products. Catalysis by LPMOs requires the reduction of the active-site copper from Cu(II) to Cu(I) by a reducing agent and H(2)O(2) or O(2) as a cosubstrate. Improves the progression of lytic enzymes in delignified miscanthus cell walls. This boosting effect dependents on the cellular type which indicates contrasted recalcitrance levels in plant tissues. The protein is AA9 family lytic polysaccharide monooxygenase E of Podospora anserina (strain S / ATCC MYA-4624 / DSM 980 / FGSC 10383) (Pleurage anserina).